The primary structure comprises 321 residues: Taste receptor type 2 member 135 (321 aa).

At 1–28 the chain is on the extracellular side; it reads MGPIMSTGETSTAHTVLGCQITDKTVIT. The helical transmembrane segment at 29 to 49 threads the bilayer; it reads LFVILVFSCLVAVVGNGFIII. Residues 50-75 lie on the Cytoplasmic side of the membrane; sequence ALGMKWLLRRTLSAHNKLLISLAASR. The helical transmembrane segment at 76–96 threads the bilayer; sequence FCLQCVVIGKNIYVFLNPSSF. Residues 97-106 are Extracellular-facing; sequence PYNPVIQLLN. The chain crosses the membrane as a helical span at residues 107–127; the sequence is LMWDFLTAATIWFCSLLGFFY. The Cytoplasmic segment spans residues 128 to 149; that stretch reads CVKIATLTHPVFVWLKYRLPGW. Residues 150–170 form a helical membrane-spanning segment; sequence VPWMLLSAVGMSSLTSILCFI. At 171 to 207 the chain is on the extracellular side; that stretch reads GNHMIYQNYARRGHQPWNATGNSLRHSLEKFYFISIK. A glycan (N-linked (GlcNAc...) asparagine) is linked at Asn-188. A helical membrane pass occupies residues 208–228; that stretch reads IIMWTVPTVIFSIFMSLLLVS. Over 229-253 the chain is Cytoplasmic; it reads LVRHMKKTLLALSELRDVWAQAHFK. A helical transmembrane segment spans residues 254-274; that stretch reads ALLPLLSFIILFISCFLTLVL. The Extracellular portion of the chain corresponds to 275–286; that stretch reads SSASSTPYQEFR. Residues 287-307 traverse the membrane as a helical segment; sequence YWMWQVVIHLCTVIHPIVILL. Residues 308–321 lie on the Cytoplasmic side of the membrane; it reads SNPVLRVVMKRGCC.

It belongs to the G-protein coupled receptor T2R family.

It localises to the membrane. In terms of biological role, putative taste receptor which may play a role in the perception of bitterness. In Rattus norvegicus (Rat), this protein is Taste receptor type 2 member 135.